The primary structure comprises 301 residues: Elongation factor Ts (301 aa).

The segment at 82-85 (TDFV) is involved in Mg(2+) ion dislocation from EF-Tu.

The protein belongs to the EF-Ts family.

It localises to the cytoplasm. Functionally, associates with the EF-Tu.GDP complex and induces the exchange of GDP to GTP. It remains bound to the aminoacyl-tRNA.EF-Tu.GTP complex up to the GTP hydrolysis stage on the ribosome. This chain is Elongation factor Ts, found in Hyphomonas neptunium (strain ATCC 15444).